Here is a 274-residue protein sequence, read N- to C-terminus: 2,3,4,5-tetrahydropyridine-2,6-dicarboxylate N-succinyltransferase (274 aa).

It belongs to the transferase hexapeptide repeat family.

It localises to the cytoplasm. It carries out the reaction (S)-2,3,4,5-tetrahydrodipicolinate + succinyl-CoA + H2O = (S)-2-succinylamino-6-oxoheptanedioate + CoA. The protein operates within amino-acid biosynthesis; L-lysine biosynthesis via DAP pathway; LL-2,6-diaminopimelate from (S)-tetrahydrodipicolinate (succinylase route): step 1/3. In Proteus mirabilis (strain HI4320), this protein is 2,3,4,5-tetrahydropyridine-2,6-dicarboxylate N-succinyltransferase.